A 518-amino-acid polypeptide reads, in one-letter code: DNA-(apurinic or apyrimidinic site) endonuclease 2 (518 aa).

The Mg(2+) site is built by Asn-8 and Glu-48. Tyr-156 is a catalytic residue. Asp-197, Asn-199, Asp-303, and His-304 together coordinate Mg(2+). Catalysis depends on Asp-197, which acts as the Proton donor/acceptor. The active-site Proton acceptor is His-304. A compositionally biased stretch (polar residues) spans 355 to 405 (STLQHNNQTRVQTCQNKAQVRSTRPQPSQVGSSRGQKNLKSYFQPSPSCPQ). A disordered region spans residues 355–407 (STLQHNNQTRVQTCQNKAQVRSTRPQPSQVGSSRGQKNLKSYFQPSPSCPQAS). A Glycyl lysine isopeptide (Lys-Gly) (interchain with G-Cter in ubiquitin) cross-link involves residue Lys-371. Positions 390–397 (QKNLKSYF) are required for the interaction and colocalization with PCNA in nuclear foci in presence of oxidative-induced DNA damaging agents. Zn(2+) is bound by residues Cys-469, His-472, Cys-495, and Cys-509. The segment at 469–518 (CGGHREPCVMRTVKKPGPNLGRRFYMCARPRGPPTDPSSRCNFFLWSRPS) adopts a GRF-type zinc-finger fold.

Belongs to the DNA repair enzymes AP/ExoA family. Interacts with PCNA; this interaction is triggered by reactive oxygen species and increased by misincorporation of uracil in nuclear DNA. The cofactor is Mg(2+). It depends on Mn(2+) as a cofactor. Post-translationally, ubiquitinated by the CUL9-RBX1 complex. Ubiquitinated by MKRN3 at Lys-371 leading to proteasomal degradation. Highly expressed in brain and kidney. Weakly expressed in the fetal brain.

The protein localises to the nucleus. Its subcellular location is the cytoplasm. It is found in the mitochondrion. The enzyme catalyses Exonucleolytic cleavage in the 3'- to 5'-direction to yield nucleoside 5'-phosphates.. 3'-5' exonuclease activity is activated by sodium and manganese. 3'-5' exonuclease and 3'-phosphodiesterase activities are stimulated in presence of PCNA. Functionally, functions as a weak apurinic/apyrimidinic (AP) endodeoxyribonuclease in the DNA base excision repair (BER) pathway of DNA lesions induced by oxidative and alkylating agents. Initiates repair of AP sites in DNA by catalyzing hydrolytic incision of the phosphodiester backbone immediately adjacent to the damage, generating a single-strand break with 5'-deoxyribose phosphate and 3'-hydroxyl ends. Also displays double-stranded DNA 3'-5' exonuclease, 3'-phosphodiesterase activities. Shows robust 3'-5' exonuclease activity on 3'-recessed heteroduplex DNA and is able to remove mismatched nucleotides preferentially. Also exhibits 3'-5' exonuclease activity on a single nucleotide gap containing heteroduplex DNA and on blunt-ended substrates. Shows fairly strong 3'-phosphodiesterase activity involved in the removal of 3'-damaged termini formed in DNA by oxidative agents. In the nucleus functions in the PCNA-dependent BER pathway. Plays a role in reversing blocked 3' DNA ends, problematic lesions that preclude DNA synthesis. Required for somatic hypermutation (SHM) and DNA cleavage step of class switch recombination (CSR) of immunoglobulin genes. Required for proper cell cycle progression during proliferation of peripheral lymphocytes. The protein is DNA-(apurinic or apyrimidinic site) endonuclease 2 (APEX2) of Homo sapiens (Human).